A 571-amino-acid chain; its full sequence is Proline--tRNA ligase (571 aa).

This sequence belongs to the class-II aminoacyl-tRNA synthetase family. ProS type 1 subfamily. As to quaternary structure, homodimer.

It localises to the cytoplasm. The catalysed reaction is tRNA(Pro) + L-proline + ATP = L-prolyl-tRNA(Pro) + AMP + diphosphate. In terms of biological role, catalyzes the attachment of proline to tRNA(Pro) in a two-step reaction: proline is first activated by ATP to form Pro-AMP and then transferred to the acceptor end of tRNA(Pro). As ProRS can inadvertently accommodate and process non-cognate amino acids such as alanine and cysteine, to avoid such errors it has two additional distinct editing activities against alanine. One activity is designated as 'pretransfer' editing and involves the tRNA(Pro)-independent hydrolysis of activated Ala-AMP. The other activity is designated 'posttransfer' editing and involves deacylation of mischarged Ala-tRNA(Pro). The misacylated Cys-tRNA(Pro) is not edited by ProRS. This chain is Proline--tRNA ligase, found in Histophilus somni (strain 129Pt) (Haemophilus somnus).